A 210-amino-acid polypeptide reads, in one-letter code: UPF0173 protein PF0020 (210 aa).

This sequence belongs to the UPF0173 family.

The polypeptide is UPF0173 protein PF0020 (Pyrococcus furiosus (strain ATCC 43587 / DSM 3638 / JCM 8422 / Vc1)).